Here is a 33-residue protein sequence, read N- to C-terminus: Unknown 31.6 kDa protein from 2D-PAGE (33 aa).

In Onion yellows phytoplasma, this protein is Unknown 31.6 kDa protein from 2D-PAGE.